Here is a 326-residue protein sequence, read N- to C-terminus: Beta-ketoacyl-[acyl-carrier-protein] synthase III (326 aa).

Residues cysteine 120 and histidine 253 contribute to the active site. The ACP-binding stretch occupies residues 254–258 (QANIR). The active site involves asparagine 283.

Belongs to the thiolase-like superfamily. FabH family. As to quaternary structure, homodimer.

It is found in the cytoplasm. The enzyme catalyses malonyl-[ACP] + acetyl-CoA + H(+) = 3-oxobutanoyl-[ACP] + CO2 + CoA. The protein operates within lipid metabolism; fatty acid biosynthesis. Functionally, catalyzes the condensation reaction of fatty acid synthesis by the addition to an acyl acceptor of two carbons from malonyl-ACP. Catalyzes the first condensation reaction which initiates fatty acid synthesis and may therefore play a role in governing the total rate of fatty acid production. Possesses both acetoacetyl-ACP synthase and acetyl transacylase activities. Its substrate specificity determines the biosynthesis of branched-chain and/or straight-chain of fatty acids. This is Beta-ketoacyl-[acyl-carrier-protein] synthase III from Cupriavidus taiwanensis (strain DSM 17343 / BCRC 17206 / CCUG 44338 / CIP 107171 / LMG 19424 / R1) (Ralstonia taiwanensis (strain LMG 19424)).